The sequence spans 522 residues: Protein nucleotidyltransferase YdiU (522 aa).

Gly101, Gly103, Arg104, Lys123, Asp135, Gly136, Arg193, and Arg200 together coordinate ATP. The active-site Proton acceptor is the Asp270. Mg(2+) is bound by residues Asn271 and Asp280. Residue Asp280 participates in ATP binding.

The protein belongs to the SELO family. Mg(2+) serves as cofactor. Mn(2+) is required as a cofactor.

The catalysed reaction is L-seryl-[protein] + ATP = 3-O-(5'-adenylyl)-L-seryl-[protein] + diphosphate. It catalyses the reaction L-threonyl-[protein] + ATP = 3-O-(5'-adenylyl)-L-threonyl-[protein] + diphosphate. It carries out the reaction L-tyrosyl-[protein] + ATP = O-(5'-adenylyl)-L-tyrosyl-[protein] + diphosphate. The enzyme catalyses L-histidyl-[protein] + UTP = N(tele)-(5'-uridylyl)-L-histidyl-[protein] + diphosphate. The catalysed reaction is L-seryl-[protein] + UTP = O-(5'-uridylyl)-L-seryl-[protein] + diphosphate. It catalyses the reaction L-tyrosyl-[protein] + UTP = O-(5'-uridylyl)-L-tyrosyl-[protein] + diphosphate. In terms of biological role, nucleotidyltransferase involved in the post-translational modification of proteins. It can catalyze the addition of adenosine monophosphate (AMP) or uridine monophosphate (UMP) to a protein, resulting in modifications known as AMPylation and UMPylation. The chain is Protein nucleotidyltransferase YdiU from Flavobacterium johnsoniae (strain ATCC 17061 / DSM 2064 / JCM 8514 / BCRC 14874 / CCUG 350202 / NBRC 14942 / NCIMB 11054 / UW101) (Cytophaga johnsonae).